The chain runs to 457 residues: Acetylcholine receptor subunit alpha-1-B (457 aa).

An N-terminal signal peptide occupies residues 1–20 (MDYTASCLIFLFIAAGTVFG). The Extracellular segment spans residues 21 to 230 (TDHETRLIGD…ITYHFVLQRL (210 aa)). Intrachain disulfides connect cysteine 148–cysteine 162 and cysteine 212–cysteine 213. A glycan (N-linked (GlcNAc...) asparagine) is linked at asparagine 161. A run of 3 helical transmembrane segments spans residues 231 to 255 (PLYF…VFYL), 263 to 281 (MTLS…LVIV), and 297 to 316 (YMLF…VIVI). Topologically, residues 317–428 (NTHHRSPSTH…WKFVAMVLDH (112 aa)) are cytoplasmic. Residues 429 to 447 (ILLAVFMTVCVIGTLAVFA) form a helical membrane-spanning segment.

It belongs to the ligand-gated ion channel (TC 1.A.9) family. Acetylcholine receptor (TC 1.A.9.1) subfamily. Alpha-1/CHRNA1 sub-subfamily. As to quaternary structure, one of the alpha chains that assemble within the acetylcholine receptor, a pentamer of two alpha chains, a beta, a delta, and a gamma or epsilon chains.

The protein localises to the postsynaptic cell membrane. It localises to the cell membrane. It catalyses the reaction K(+)(in) = K(+)(out). It carries out the reaction Na(+)(in) = Na(+)(out). Upon acetylcholine binding, the AChR responds by an extensive change in conformation that affects all subunits and leads to opening of an ion-conducting channel across the plasma membrane. This is Acetylcholine receptor subunit alpha-1-B (chrna1-b) from Xenopus laevis (African clawed frog).